The following is a 34-amino-acid chain: Cycloamanide B proprotein (34 aa).

Residues 1–10 constitute a propeptide that is removed on maturation; the sequence is MSDINAARLP. Residues 11–17 constitute a cross-link (cyclopeptide (Ser-Pro)); it reads SFFFPIP. Residues 18 to 34 constitute a propeptide that is removed on maturation; the sequence is CISDDIEMVLTRGESLC.

The protein belongs to the MSDIN fungal toxin family. Processed by the macrocyclase-peptidase enzyme POPB to yield a cyclic decapeptide. POPB first removes 10 residues from the N-terminus. Conformational trapping of the remaining peptide forces the enzyme to release this intermediate rather than proceed to macrocyclization. The enzyme rebinds the remaining peptide in a different conformation and catalyzes macrocyclization of the N-terminal 7 residues.

Functionally, cyclic heptapeptide that belongs to the MSDIN-like toxin family responsible for a large number of food poisoning cases and deaths. Cycloaminide B is non-toxic to mammals but shows immunosuppressive activity, probably through the inhibition of the action of interleukin-1 and interleukin-2. This Amanita phalloides (Death cap) protein is Cycloamanide B proprotein.